A 497-amino-acid chain; its full sequence is Cytochrome P450 monooxygenase 151 (497 aa).

The helical transmembrane segment at 1–21 (MTDLVPVYYAFAGVVAALLFY) threads the bilayer. Asn292 and Asn397 each carry an N-linked (GlcNAc...) asparagine glycan. Cys441 lines the heme pocket.

It belongs to the cytochrome P450 family. The cofactor is heme.

The protein resides in the membrane. The protein operates within secondary metabolite biosynthesis. In terms of biological role, cytochrome P450 monooxygenase that is able to use dehydroabietic acid and testosterone as substrates for oxidation, suggesting that the natural substrate(s) may be structurally related to steroid compounds. This chain is Cytochrome P450 monooxygenase 151, found in Postia placenta (strain ATCC 44394 / Madison 698-R) (Brown rot fungus).